The primary structure comprises 408 residues: Aurora kinase A-B (408 aa).

Basic and acidic residues predominate over residues 1–10 (MERAVKENHK). Residues 1 to 128 (MERAVKENHK…QGKTLAVPKE (128 aa)) are disordered. The segment covering 85 to 110 (GHQTSKPQGPNENRNPQQTSHSSTPN) has biased composition (polar residues). The Protein kinase domain maps to 140–390 (FEIGRPLGKG…LKGVLEHPWI (251 aa)). Residues Lys-150, Lys-169, and 217–220 (LDYA) contribute to the ATP site. Asp-263 (proton acceptor) is an active-site residue. An ATP-binding site is contributed by Asp-281. The segment at 287–300 (HAPSSRRTTLCGTL) is activation segment.

This sequence belongs to the protein kinase superfamily. Ser/Thr protein kinase family. Aurora subfamily. As to quaternary structure, interacts with kif2c and kif11. Post-translationally, phosphorylated. Autophosphorylated on a serine residue.

It localises to the cytoplasm. Its subcellular location is the cytoskeleton. It is found in the spindle pole. The protein resides in the microtubule organizing center. The protein localises to the centrosome. The catalysed reaction is L-seryl-[protein] + ATP = O-phospho-L-seryl-[protein] + ADP + H(+). It catalyses the reaction L-threonyl-[protein] + ATP = O-phospho-L-threonyl-[protein] + ADP + H(+). Functionally, mitotic serine/threonine kinases that contributes to the regulation of cell cycle progression. Associates with the centrosome and the spindle microtubules during mitosis and plays a critical role in various mitotic events including the establishment of mitotic spindle, centrosome duplication, centrosome separation as well as maturation, chromosomal alignment, spindle assembly checkpoint, and cytokinesis. Phosphorylates numerous target proteins. Important for microtubule formation and/or stabilization. The sequence is that of Aurora kinase A-B (aurka-b) from Xenopus laevis (African clawed frog).